We begin with the raw amino-acid sequence, 461 residues long: Vimentin (461 aa).

Composition is skewed to low complexity over residues 1 to 14 (MNRTTSRQTTSSSS) and 35 to 52 (SSRQYSSPVRSSRMSYSV). Residues 1–52 (MNRTTSRQTTSSSSYKRMFGGEGRPSVGMARSTLSSRQYSSPVRSSRMSYSV) are disordered. The interval 1–91 (MNRTTSRQTT…FALSDAINSE (91 aa)) is head. Positions 92-127 (FKANRTNEKAEMQHLNDRFASYIDKVRFLEQQNKIL) are coil 1A. The stretch at 92 to 127 (FKANRTNEKAEMQHLNDRFASYIDKVRFLEQQNKIL) forms a coiled coil. An IF rod domain is found at 99-407 (EKAEMQHLND…KLLEGEESRI (309 aa)). The interval 128–149 (LAELEQLKGKGASRIGDLYEDE) is linker 1. Residues 150-241 (MRDLRRQVDQ…KLHDEEVAEL (92 aa)) are a coiled coil. The coil 1B stretch occupies residues 150–241 (MRDLRRQVDQ…KLHDEEVAEL (92 aa)). Residues 242–264 (QAQIQDQHVQIDMDVAKPDLTAA) form a linker 12 region. The interval 265–403 (LRDVRVQYET…ATYRKLLEGE (139 aa)) is coil 2. A coiled-coil region spans residues 299–403 (NRNTDAIRQA…ATYRKLLEGE (105 aa)). The interval 404–461 (ESRITTPMPNFSSFNLRESMLEARPMIDNLSKKVVIKTIETRDGHVINESTQNHDDLE) is tail.

Belongs to the intermediate filament family. As to quaternary structure, homomer assembled from elementary dimers. Post-translationally, one of the most prominent phosphoproteins in various cells of mesenchymal origin. Phosphorylation is enhanced during cell division, at which time vimentin filaments are significantly reorganized.

It is found in the cytoplasm. It localises to the cytoskeleton. The protein localises to the nucleus matrix. Functionally, vimentins are class-III intermediate filaments found in various non-epithelial cells, especially mesenchymal cells. Vimentin is attached to the nucleus, endoplasmic reticulum, and mitochondria, either laterally or terminally. This is Vimentin (vim) from Oncorhynchus mykiss (Rainbow trout).